Reading from the N-terminus, the 462-residue chain is tRNA modification GTPase MnmE (462 aa).

3 residues coordinate (6S)-5-formyl-5,6,7,8-tetrahydrofolate: arginine 27, glutamate 89, and arginine 128. The region spanning 223–383 (GLKIAIVGRP…LEAAILAAVG (161 aa)) is the TrmE-type G domain. Asparagine 233 lines the K(+) pocket. GTP is bound by residues 233–238 (NVGKSS), 252–258 (TDLPGTT), and 277–280 (DTAG). Serine 237 is a binding site for Mg(2+). Positions 252, 254, and 257 each coordinate K(+). Threonine 258 contacts Mg(2+). Lysine 462 lines the (6S)-5-formyl-5,6,7,8-tetrahydrofolate pocket.

This sequence belongs to the TRAFAC class TrmE-Era-EngA-EngB-Septin-like GTPase superfamily. TrmE GTPase family. As to quaternary structure, homodimer. Heterotetramer of two MnmE and two MnmG subunits. K(+) is required as a cofactor.

The protein localises to the cytoplasm. Its function is as follows. Exhibits a very high intrinsic GTPase hydrolysis rate. Involved in the addition of a carboxymethylaminomethyl (cmnm) group at the wobble position (U34) of certain tRNAs, forming tRNA-cmnm(5)s(2)U34. The protein is tRNA modification GTPase MnmE of Synechococcus elongatus (strain ATCC 33912 / PCC 7942 / FACHB-805) (Anacystis nidulans R2).